We begin with the raw amino-acid sequence, 50 residues long: Large ribosomal subunit protein bL33 (50 aa).

The protein belongs to the bacterial ribosomal protein bL33 family.

This chain is Large ribosomal subunit protein bL33, found in Sulfurovum sp. (strain NBC37-1).